The primary structure comprises 526 residues: NAD(P)H-quinone oxidoreductase chain 4 (526 aa).

The next 13 membrane-spanning stretches (helical) occupy residues 5 to 25 (FPWLTVIILLPLVAALAVPLI), 32 to 52 (WYSFAVCLVDFVLMVAAFFTS), 87 to 107 (LILLTGFITALATLAAWPVTL), 111 to 131 (MFHFLMLAMLAGMVGVFAVQD), 133 to 153 (VLFFLFFELELVPVYLMLAIW), 165 to 185 (FILYTAVGSLFILVVGLAMYF), 211 to 231 (FLGLLIAYAVKLPIFPLHTWL), 239 to 259 (TAPVHMLLAGILLKMGGYALI), 273 to 293 (FAPLLIVLGIVNIIYAALTSF), 302 to 320 (IAYSSISHMGFVLIGVGSL), 331 to 351 (QMISHGLIGASLFFLVGATYD), 371 to 393 (IFAMFTACSMASLALPGMSGFVA), and 414 to 434 (LVVLFAAFGVILTPIYLLSML).

The protein belongs to the complex I subunit 4 family.

The protein localises to the cell inner membrane. The catalysed reaction is a plastoquinone + NADH + (n+1) H(+)(in) = a plastoquinol + NAD(+) + n H(+)(out). It catalyses the reaction a plastoquinone + NADPH + (n+1) H(+)(in) = a plastoquinol + NADP(+) + n H(+)(out). In terms of biological role, NDH-1 shuttles electrons from NAD(P)H, via FMN and iron-sulfur (Fe-S) centers, to quinones in the respiratory chain. The immediate electron acceptor for the enzyme in this species is believed to be plastoquinone. Couples the redox reaction to proton translocation (for every two electrons transferred, four hydrogen ions are translocated across the cytoplasmic membrane), and thus conserves the redox energy in a proton gradient. This is NAD(P)H-quinone oxidoreductase chain 4 from Gloeobacter violaceus (strain ATCC 29082 / PCC 7421).